The chain runs to 626 residues: Miltiradiene synthase KSL1, chloroplastic (626 aa).

The N-terminal 51 residues, 1 to 51 (MSLAFNLRVIPFSGHTIQSRRGLFPVHESPMITTKPFAAVKCSLTTSTDLM), are a transit peptide targeting the chloroplast. Positions 329, 333, 473, and 481 each coordinate Mg(2+). The DDXXD motif motif lies at 329-333 (DDFFD).

The protein belongs to the terpene synthase family. The cofactor is Mg(2+). In terms of tissue distribution, highly expressed in roots, and, at low levels, in stems and leaves.

The protein resides in the plastid. Its subcellular location is the chloroplast. It catalyses the reaction (+)-copalyl diphosphate = miltiradiene + diphosphate. Its pathway is secondary metabolite biosynthesis; terpenoid biosynthesis. Functionally, involved in the biosynthesis of ent-kaurene diterpenoids natural products such as oridonin, miltiradiene, eriocalyxin B and nezukol, known to exhibit antitumor, anti-inflammatory and antibacterial activities. Catalyzes the conversion of (+)-copalyl diphosphate ((+)-CPP) to miltiradiene. The polypeptide is Miltiradiene synthase KSL1, chloroplastic (Isodon rubescens (Rabdosia rubescens)).